The chain runs to 202 residues: FMN-dependent NADH:quinone oxidoreductase (202 aa).

Residues Ser9 and 95–98 contribute to the FMN site; that span reads MYNF.

Belongs to the azoreductase type 1 family. As to quaternary structure, homodimer. FMN is required as a cofactor.

It catalyses the reaction 2 a quinone + NADH + H(+) = 2 a 1,4-benzosemiquinone + NAD(+). The catalysed reaction is N,N-dimethyl-1,4-phenylenediamine + anthranilate + 2 NAD(+) = 2-(4-dimethylaminophenyl)diazenylbenzoate + 2 NADH + 2 H(+). Quinone reductase that provides resistance to thiol-specific stress caused by electrophilic quinones. In terms of biological role, also exhibits azoreductase activity. Catalyzes the reductive cleavage of the azo bond in aromatic azo compounds to the corresponding amines. This chain is FMN-dependent NADH:quinone oxidoreductase, found in Chromobacterium violaceum (strain ATCC 12472 / DSM 30191 / JCM 1249 / CCUG 213 / NBRC 12614 / NCIMB 9131 / NCTC 9757 / MK).